Reading from the N-terminus, the 363-residue chain is uncharacterized protein (363 aa).

Residues 35–262 (TVPGPPGAES…GLSPCCGDGG (228 aa)) are disordered. Polar residues predominate over residues 56–75 (AVSSSRNPNSAGRTPNSYLT). Low complexity predominate over residues 100–116 (GADPALGSLPAAGLSGL).

This is an uncharacterized protein from Homo sapiens (Human).